A 160-amino-acid chain; its full sequence is Putative pre-16S rRNA nuclease (160 aa).

Belongs to the YqgF nuclease family.

The protein resides in the cytoplasm. In terms of biological role, could be a nuclease involved in processing of the 5'-end of pre-16S rRNA. In Jannaschia sp. (strain CCS1), this protein is Putative pre-16S rRNA nuclease.